A 913-amino-acid chain; its full sequence is Protein translocase subunit SecA (913 aa).

Residues glutamine 87, 105–109 (GEGKT), and aspartate 517 each bind ATP. Disordered regions lie at residues 568-588 (ESRRIDNQLRGRSGRQGDPGS) and 871-913 (EVAV…GKLS). 4 residues coordinate Zn(2+): cysteine 897, cysteine 899, cysteine 908, and histidine 909. Positions 903 to 913 (KKYKQCHGKLS) are enriched in basic residues.

This sequence belongs to the SecA family. Monomer and homodimer. Part of the essential Sec protein translocation apparatus which comprises SecA, SecYEG and auxiliary proteins SecDF-YajC and YidC. It depends on Zn(2+) as a cofactor.

The protein resides in the cell inner membrane. The protein localises to the cytoplasm. The enzyme catalyses ATP + H2O + cellular proteinSide 1 = ADP + phosphate + cellular proteinSide 2.. In terms of biological role, part of the Sec protein translocase complex. Interacts with the SecYEG preprotein conducting channel. Has a central role in coupling the hydrolysis of ATP to the transfer of proteins into and across the cell membrane, serving both as a receptor for the preprotein-SecB complex and as an ATP-driven molecular motor driving the stepwise translocation of polypeptide chains across the membrane. The chain is Protein translocase subunit SecA from Coxiella burnetii (strain RSA 493 / Nine Mile phase I).